Consider the following 1329-residue polypeptide: Synergin gamma (1329 aa).

Positions 112–152 (MQKQFAEEQQKRFEQQQKLLEEERKRRQFEEQKQKLRLLSS) form a coiled coil. The interval 175–211 (GFSRDAKMHPTPASHPKKPDCPTSSHSTKTVSPSSAF) is disordered. Over residues 197–209 (TSSHSTKTVSPSS) the composition is skewed to low complexity. Residues 393 to 504 (NESLVPDAYK…TPVSQPTAMT (112 aa)) form the EH domain. Positions 555–559 (DFQDF) match the DFXDF motif 1 motif. The residue at position 571 (Ser571) is a Phosphoserine. Residues 578-594 (VPASSKTSNSQHGNSAP) show a composition bias toward polar residues. The interval 578 to 600 (VPASSKTSNSQHGNSAPSLLIPL) is disordered. An N6-acetyllysine modification is found at Lys609. Residues 614–878 (KGISAEKPSE…ADFHSSKFSS (265 aa)) form an interaction with AP1G1 region. Disordered regions lie at residues 661–701 (GTDD…TQTQ) and 730–753 (AFSTSKSVSSRPQPAGSAAAPASL). Ser676 carries the phosphoserine modification. The interaction with AP1G1, AP1G2 and GGA1 stretch occupies residues 761-773 (LADDFGEFNLFGE). The DFXDF motif 2 motif lies at 785-789 (DFADF). The tract at residues 797–835 (IPSEPKADDKYEALREEGSPGALSTSTVEGAHNPPVSSS) is disordered. Residues 801–814 (PKADDKYEALREEG) are compositionally biased toward basic and acidic residues. Ser815 is subject to Phosphoserine. Residue Lys836 is modified to N6-acetyllysine. Phosphoserine is present on residues Ser844 and Ser864. Disordered regions lie at residues 856–922 (KENT…DSED), 941–1042 (HVMS…FGEF), and 1088–1113 (SLSLGDKEISRSSPSPALEQPFRDRS). A compositionally biased stretch (basic and acidic residues) spans 864–873 (SDGDFADFHS). Residues 867 to 871 (DFADF) carry the DFXDF motif 3 motif. The span at 874–883 (SKFSSTSSDK) shows a compositional bias: low complexity. Residues Ser904, Ser944, Ser947, Ser997, Ser1021, Ser1088, Ser1090, Ser1102, and Ser1113 each carry the phosphoserine modification. A compositionally biased stretch (polar residues) spans 944-955 (SDSSLDLPTVSG). Over residues 1016-1028 (ENTCPSPASSVAS) the composition is skewed to polar residues. Thr1115 is modified (phosphothreonine).

As to quaternary structure, self-associates. Interacts with GGA1 (via GAE domain). Interacts with GGA2 and GGA3. Interacts with AP1G1 (via GAE domain), a subunit of adapter protein complex AP-1. Interacts with AP1G2 (via GAE domain) a subunit of adapter protein complex AP-1. Component of the aftiphilin/p200/gamma-synergin complex, at least composed of AFTPH/aftiphilin, HEATR5B/p200a and SYNRG/gamma-synergin, which plays a role in the AP1G1/AP-1-mediated trafficking of transferrin from early to recycling endosomes. Within the complex interacts with AFTPH/aftiphilin and HEATR5B/p200a; the interactions are direct. Interacts (via EH domain) with SCAMP1. In terms of tissue distribution, detected in brain and liver (at protein level). Ubiquitously expressed.

The protein resides in the cytoplasm. The protein localises to the golgi apparatus. It is found in the trans-Golgi network membrane. It localises to the perinuclear region. Its subcellular location is the cytoplasmic vesicle. The protein resides in the clathrin-coated vesicle. Functionally, plays a role in endocytosis and/or membrane trafficking at the trans-Golgi network (TGN). May act by linking the adapter protein complex AP-1 to other proteins. Component of clathrin-coated vesicles. Component of the aftiphilin/p200/gamma-synergin complex, which plays roles in AP1G1/AP-1-mediated protein trafficking including the trafficking of transferrin from early to recycling endosomes, and the membrane trafficking of furin and the lysosomal enzyme cathepsin D between the trans-Golgi network (TGN) and endosomes. The sequence is that of Synergin gamma (Synrg) from Rattus norvegicus (Rat).